The following is a 23-amino-acid chain: VDNMVPEKQKLFQAXNGIPVHLF.

It belongs to the cytochrome c oxidase VIIa family. As to quaternary structure, component of the cytochrome c oxidase (complex IV, CIV), a multisubunit enzyme composed of 14 subunits. The complex is composed of a catalytic core of 3 subunits MT-CO1, MT-CO2 and MT-CO3, encoded in the mitochondrial DNA, and 11 supernumerary subunits COX4I, COX5A, COX5B, COX6A, COX6B, COX6C, COX7A, COX7B, COX7C, COX8 and NDUFA4, which are encoded in the nuclear genome. The complex exists as a monomer or a dimer and forms supercomplexes (SCs) in the inner mitochondrial membrane with NADH-ubiquinone oxidoreductase (complex I, CI) and ubiquinol-cytochrome c oxidoreductase (cytochrome b-c1 complex, complex III, CIII), resulting in different assemblies (supercomplex SCI(1)III(2)IV(1) and megacomplex MCI(2)III(2)IV(2)).

It is found in the mitochondrion inner membrane. Its pathway is energy metabolism; oxidative phosphorylation. Functionally, component of the cytochrome c oxidase, the last enzyme in the mitochondrial electron transport chain which drives oxidative phosphorylation. The respiratory chain contains 3 multisubunit complexes succinate dehydrogenase (complex II, CII), ubiquinol-cytochrome c oxidoreductase (cytochrome b-c1 complex, complex III, CIII) and cytochrome c oxidase (complex IV, CIV), that cooperate to transfer electrons derived from NADH and succinate to molecular oxygen, creating an electrochemical gradient over the inner membrane that drives transmembrane transport and the ATP synthase. Cytochrome c oxidase is the component of the respiratory chain that catalyzes the reduction of oxygen to water. Electrons originating from reduced cytochrome c in the intermembrane space (IMS) are transferred via the dinuclear copper A center (CU(A)) of subunit 2 and heme A of subunit 1 to the active site in subunit 1, a binuclear center (BNC) formed by heme A3 and copper B (CU(B)). The BNC reduces molecular oxygen to 2 water molecules using 4 electrons from cytochrome c in the IMS and 4 protons from the mitochondrial matrix. The protein is Cytochrome c oxidase subunit 7A-liver, mitochondrial of Oncorhynchus mykiss (Rainbow trout).